The following is a 587-amino-acid chain: Lipoprotein LpqB (587 aa).

The first 19 residues, 1–19, serve as a signal peptide directing secretion; that stretch reads MERLMRLTILLFLGAVLAG. The N-palmitoyl cysteine moiety is linked to residue cysteine 20. Residue cysteine 20 is the site of S-diacylglycerol cysteine attachment.

It belongs to the LpqB lipoprotein family. Interacts with MtrB, probably extracytoplasmically.

It localises to the cell membrane. Its subcellular location is the secreted. The protein resides in the cell wall. May modulate activity of the MtrAB system in controlling homeostasis of the cell wall and cell division. This chain is Lipoprotein LpqB, found in Mycobacterium tuberculosis (strain CDC 1551 / Oshkosh).